The chain runs to 201 residues: Recombination protein RecR (201 aa).

A C4-type zinc finger spans residues 60-75 (CHECGNVDTSDPCTIC). The Toprim domain occupies 83-178 (SILVVVEDVS…KVTKLAHGVP (96 aa)).

The protein belongs to the RecR family.

May play a role in DNA repair. It seems to be involved in an RecBC-independent recombinational process of DNA repair. It may act with RecF and RecO. This chain is Recombination protein RecR, found in Methylobacterium nodulans (strain LMG 21967 / CNCM I-2342 / ORS 2060).